Here is a 407-residue protein sequence, read N- to C-terminus: uncharacterized protein (407 aa).

The protein belongs to the peptidase U32 family.

This is an uncharacterized protein from Methanocaldococcus jannaschii (strain ATCC 43067 / DSM 2661 / JAL-1 / JCM 10045 / NBRC 100440) (Methanococcus jannaschii).